The chain runs to 398 residues: S-adenosylmethionine synthase 2 (398 aa).

Position 16 (histidine 16) interacts with ATP. Aspartate 18 is a Mg(2+) binding site. K(+) is bound at residue glutamate 51. Residues glutamate 64 and glutamine 108 each coordinate L-methionine. Positions glutamine 108–alanine 118 are flexible loop. ATP contacts are provided by residues aspartate 176–lysine 178, lysine 242–phenylalanine 243, aspartate 251, arginine 257–lysine 258, alanine 274, and lysine 278. Aspartate 251 serves as a coordination point for L-methionine. Lysine 282 serves as a coordination point for L-methionine.

The protein belongs to the AdoMet synthase family. Homotetramer; dimer of dimers. Requires Mg(2+) as cofactor. K(+) is required as a cofactor.

The protein resides in the cytoplasm. It carries out the reaction L-methionine + ATP + H2O = S-adenosyl-L-methionine + phosphate + diphosphate. The protein operates within amino-acid biosynthesis; S-adenosyl-L-methionine biosynthesis; S-adenosyl-L-methionine from L-methionine: step 1/1. Its function is as follows. Catalyzes the formation of S-adenosylmethionine (AdoMet) from methionine and ATP. The overall synthetic reaction is composed of two sequential steps, AdoMet formation and the subsequent tripolyphosphate hydrolysis which occurs prior to release of AdoMet from the enzyme. The polypeptide is S-adenosylmethionine synthase 2 (Rhodopseudomonas palustris (strain BisB18)).